The chain runs to 369 residues: Chorismate synthase (369 aa).

NADP(+)-binding residues include R48 and R54. FMN contacts are provided by residues 125 to 127, 238 to 239, G278, 293 to 297, and R319; these read RSS, NA, and KPTSS.

The protein belongs to the chorismate synthase family. As to quaternary structure, homotetramer. It depends on FMNH2 as a cofactor.

It carries out the reaction 5-O-(1-carboxyvinyl)-3-phosphoshikimate = chorismate + phosphate. The protein operates within metabolic intermediate biosynthesis; chorismate biosynthesis; chorismate from D-erythrose 4-phosphate and phosphoenolpyruvate: step 7/7. Functionally, catalyzes the anti-1,4-elimination of the C-3 phosphate and the C-6 proR hydrogen from 5-enolpyruvylshikimate-3-phosphate (EPSP) to yield chorismate, which is the branch point compound that serves as the starting substrate for the three terminal pathways of aromatic amino acid biosynthesis. This reaction introduces a second double bond into the aromatic ring system. In Burkholderia pseudomallei (strain 1106a), this protein is Chorismate synthase.